The chain runs to 480 residues: UDP-N-acetylmuramate--L-alanine ligase (480 aa).

125–131 (GTHGKTT) provides a ligand contact to ATP.

Belongs to the MurCDEF family.

It is found in the cytoplasm. It carries out the reaction UDP-N-acetyl-alpha-D-muramate + L-alanine + ATP = UDP-N-acetyl-alpha-D-muramoyl-L-alanine + ADP + phosphate + H(+). It participates in cell wall biogenesis; peptidoglycan biosynthesis. Functionally, cell wall formation. This is UDP-N-acetylmuramate--L-alanine ligase from Ectopseudomonas mendocina (strain ymp) (Pseudomonas mendocina).